Reading from the N-terminus, the 200-residue chain is dITP/XTP pyrophosphatase (200 aa).

Residue S16 to K21 participates in substrate binding. Positions 46 and 75 each coordinate Mg(2+). The active-site Proton acceptor is D75. Residues S76, F154–D157, K177, and H182–R183 each bind substrate.

The protein belongs to the HAM1 NTPase family. In terms of assembly, homodimer. Mg(2+) is required as a cofactor.

It catalyses the reaction XTP + H2O = XMP + diphosphate + H(+). The enzyme catalyses dITP + H2O = dIMP + diphosphate + H(+). The catalysed reaction is ITP + H2O = IMP + diphosphate + H(+). In terms of biological role, pyrophosphatase that catalyzes the hydrolysis of nucleoside triphosphates to their monophosphate derivatives, with a high preference for the non-canonical purine nucleotides XTP (xanthosine triphosphate), dITP (deoxyinosine triphosphate) and ITP. Seems to function as a house-cleaning enzyme that removes non-canonical purine nucleotides from the nucleotide pool, thus preventing their incorporation into DNA/RNA and avoiding chromosomal lesions. The protein is dITP/XTP pyrophosphatase of Prochlorococcus marinus (strain SARG / CCMP1375 / SS120).